A 317-amino-acid polypeptide reads, in one-letter code: Lipoyl synthase (317 aa).

[4Fe-4S] cluster-binding residues include cysteine 56, cysteine 61, cysteine 67, cysteine 82, cysteine 86, cysteine 89, and serine 298. Residues 68–287 form the Radical SAM core domain; that stretch reads WEDREATFLI…KEEAEQIGFS (220 aa).

Belongs to the radical SAM superfamily. Lipoyl synthase family. Requires [4Fe-4S] cluster as cofactor.

It is found in the cytoplasm. It catalyses the reaction [[Fe-S] cluster scaffold protein carrying a second [4Fe-4S](2+) cluster] + N(6)-octanoyl-L-lysyl-[protein] + 2 oxidized [2Fe-2S]-[ferredoxin] + 2 S-adenosyl-L-methionine + 4 H(+) = [[Fe-S] cluster scaffold protein] + N(6)-[(R)-dihydrolipoyl]-L-lysyl-[protein] + 4 Fe(3+) + 2 hydrogen sulfide + 2 5'-deoxyadenosine + 2 L-methionine + 2 reduced [2Fe-2S]-[ferredoxin]. The protein operates within protein modification; protein lipoylation via endogenous pathway; protein N(6)-(lipoyl)lysine from octanoyl-[acyl-carrier-protein]: step 2/2. Catalyzes the radical-mediated insertion of two sulfur atoms into the C-6 and C-8 positions of the octanoyl moiety bound to the lipoyl domains of lipoate-dependent enzymes, thereby converting the octanoylated domains into lipoylated derivatives. In Streptomyces coelicolor (strain ATCC BAA-471 / A3(2) / M145), this protein is Lipoyl synthase.